A 372-amino-acid polypeptide reads, in one-letter code: Glutamate 5-kinase (372 aa).

An ATP-binding site is contributed by Lys-6. Positions 46, 133, and 145 each coordinate substrate. ATP contacts are provided by residues Thr-165–Asp-166 and Thr-207–Lys-213. The region spanning Ser-272–Lys-350 is the PUA domain.

It belongs to the glutamate 5-kinase family.

Its subcellular location is the cytoplasm. The enzyme catalyses L-glutamate + ATP = L-glutamyl 5-phosphate + ADP. It functions in the pathway amino-acid biosynthesis; L-proline biosynthesis; L-glutamate 5-semialdehyde from L-glutamate: step 1/2. Its function is as follows. Catalyzes the transfer of a phosphate group to glutamate to form L-glutamate 5-phosphate. In Thermoanaerobacter pseudethanolicus (strain ATCC 33223 / 39E) (Clostridium thermohydrosulfuricum), this protein is Glutamate 5-kinase.